The chain runs to 234 residues: Purine nucleoside phosphorylase DeoD-type (234 aa).

An a purine D-ribonucleoside-binding site is contributed by histidine 4. Residues glycine 20, arginine 24, arginine 43, and 87-90 each bind phosphate; that span reads RVGT. A purine D-ribonucleoside is bound by residues glutamate 162, 178–180, and 202–203; these read EME and SD. The Proton donor role is filled by aspartate 203.

The protein belongs to the PNP/UDP phosphorylase family. As to quaternary structure, homohexamer; trimer of homodimers.

It carries out the reaction a purine D-ribonucleoside + phosphate = a purine nucleobase + alpha-D-ribose 1-phosphate. It catalyses the reaction a purine 2'-deoxy-D-ribonucleoside + phosphate = a purine nucleobase + 2-deoxy-alpha-D-ribose 1-phosphate. In terms of biological role, catalyzes the reversible phosphorolytic breakdown of the N-glycosidic bond in the beta-(deoxy)ribonucleoside molecules, with the formation of the corresponding free purine bases and pentose-1-phosphate. The chain is Purine nucleoside phosphorylase DeoD-type from Anoxybacillus flavithermus (strain DSM 21510 / WK1).